A 370-amino-acid chain; its full sequence is Anhydro-N-acetylmuramic acid kinase (370 aa).

ATP is bound at residue 12–19 (GTSLDGVD).

Belongs to the anhydro-N-acetylmuramic acid kinase family.

It catalyses the reaction 1,6-anhydro-N-acetyl-beta-muramate + ATP + H2O = N-acetyl-D-muramate 6-phosphate + ADP + H(+). Its pathway is amino-sugar metabolism; 1,6-anhydro-N-acetylmuramate degradation. The protein operates within cell wall biogenesis; peptidoglycan recycling. Its function is as follows. Catalyzes the specific phosphorylation of 1,6-anhydro-N-acetylmuramic acid (anhMurNAc) with the simultaneous cleavage of the 1,6-anhydro ring, generating MurNAc-6-P. Is required for the utilization of anhMurNAc either imported from the medium or derived from its own cell wall murein, and thus plays a role in cell wall recycling. The chain is Anhydro-N-acetylmuramic acid kinase from Pectobacterium atrosepticum (strain SCRI 1043 / ATCC BAA-672) (Erwinia carotovora subsp. atroseptica).